The following is a 206-amino-acid chain: Ribonuclease HII (206 aa).

In terms of domain architecture, RNase H type-2 spans 14-206 (EFICGIDEVG…FKLRQLGEKV (193 aa)). A divalent metal cation contacts are provided by Asp20, Glu21, and Asp117.

This sequence belongs to the RNase HII family. Mn(2+) serves as cofactor. It depends on Mg(2+) as a cofactor.

The protein resides in the cytoplasm. It catalyses the reaction Endonucleolytic cleavage to 5'-phosphomonoester.. In terms of biological role, endonuclease that specifically degrades the RNA of RNA-DNA hybrids. The chain is Ribonuclease HII from Chlorobium chlorochromatii (strain CaD3).